A 153-amino-acid chain; its full sequence is Aspartate carbamoyltransferase regulatory chain (153 aa).

4 residues coordinate Zn(2+): cysteine 110, cysteine 115, cysteine 138, and cysteine 141.

Belongs to the PyrI family. As to quaternary structure, contains catalytic and regulatory chains. The cofactor is Zn(2+).

Functionally, involved in allosteric regulation of aspartate carbamoyltransferase. In Bacteroides fragilis (strain ATCC 25285 / DSM 2151 / CCUG 4856 / JCM 11019 / LMG 10263 / NCTC 9343 / Onslow / VPI 2553 / EN-2), this protein is Aspartate carbamoyltransferase regulatory chain.